The following is a 478-amino-acid chain: Trigger factor (478 aa).

Residues 162-243 (GDFVSIDLSA…VKSIKERELP (82 aa)) form the PPIase FKBP-type domain. Positions 424 to 478 (KDTDGNDIDTTEFFGPSGGAQAEAEGADEADADSDADSDTEADSDTEADEADEAK) are disordered. Positions 448 to 478 (EGADEADADSDADSDTEADSDTEADEADEAK) are enriched in acidic residues.

Belongs to the FKBP-type PPIase family. Tig subfamily.

Its subcellular location is the cytoplasm. The enzyme catalyses [protein]-peptidylproline (omega=180) = [protein]-peptidylproline (omega=0). Involved in protein export. Acts as a chaperone by maintaining the newly synthesized protein in an open conformation. Functions as a peptidyl-prolyl cis-trans isomerase. This is Trigger factor from Mycobacterium sp. (strain KMS).